We begin with the raw amino-acid sequence, 206 residues long: Large ribosomal subunit protein uL4 (206 aa).

The segment at 47-75 (GTQSAKTRAEVSGGGIKPWRQKGTGRARQ) is disordered.

It belongs to the universal ribosomal protein uL4 family. In terms of assembly, part of the 50S ribosomal subunit.

Its function is as follows. One of the primary rRNA binding proteins, this protein initially binds near the 5'-end of the 23S rRNA. It is important during the early stages of 50S assembly. It makes multiple contacts with different domains of the 23S rRNA in the assembled 50S subunit and ribosome. Forms part of the polypeptide exit tunnel. This Clostridium botulinum (strain ATCC 19397 / Type A) protein is Large ribosomal subunit protein uL4.